Consider the following 60-residue polypeptide: UPF0434 protein Daci_3569 (60 aa).

This sequence belongs to the UPF0434 family.

This chain is UPF0434 protein Daci_3569, found in Delftia acidovorans (strain DSM 14801 / SPH-1).